We begin with the raw amino-acid sequence, 436 residues long: GTPase Der (436 aa).

EngA-type G domains follow at residues 4–167 (PIVA…PDEA) and 175–351 (IRFS…DNHR). Residues 10–17 (GRPNVGKS), 57–61 (DTGGI), 119–122 (NKVD), 181–188 (GRPNVGKS), 229–233 (DTAGM), and 294–297 (NKWD) each bind GTP. The KH-like domain maps to 352-436 (KRITSSTLND…PIKLIVRARK (85 aa)).

It belongs to the TRAFAC class TrmE-Era-EngA-EngB-Septin-like GTPase superfamily. EngA (Der) GTPase family. As to quaternary structure, associates with the 50S ribosomal subunit.

Its function is as follows. GTPase that plays an essential role in the late steps of ribosome biogenesis. The sequence is that of GTPase Der from Leuconostoc mesenteroides subsp. mesenteroides (strain ATCC 8293 / DSM 20343 / BCRC 11652 / CCM 1803 / JCM 6124 / NCDO 523 / NBRC 100496 / NCIMB 8023 / NCTC 12954 / NRRL B-1118 / 37Y).